We begin with the raw amino-acid sequence, 475 residues long: L-seryl-tRNA(Sec) selenium transferase (475 aa).

Lysine 295 is subject to N6-(pyridoxal phosphate)lysine.

The protein belongs to the SelA family. Requires pyridoxal 5'-phosphate as cofactor.

It localises to the cytoplasm. It carries out the reaction L-seryl-tRNA(Sec) + selenophosphate + H(+) = L-selenocysteinyl-tRNA(Sec) + phosphate. The protein operates within aminoacyl-tRNA biosynthesis; selenocysteinyl-tRNA(Sec) biosynthesis; selenocysteinyl-tRNA(Sec) from L-seryl-tRNA(Sec) (bacterial route): step 1/1. Its function is as follows. Converts seryl-tRNA(Sec) to selenocysteinyl-tRNA(Sec) required for selenoprotein biosynthesis. The chain is L-seryl-tRNA(Sec) selenium transferase from Desulfovibrio desulfuricans (strain ATCC 27774 / DSM 6949 / MB).